The following is a 471-amino-acid chain: 5-hydroxytryptamine receptor 2A (471 aa).

The Extracellular segment spans residues 1–80; sequence MDILCEENTS…LQEKNWSALL (80 aa). Asparagine 8, asparagine 38, asparagine 44, asparagine 51, and asparagine 54 each carry an N-linked (GlcNAc...) asparagine glycan. A helical transmembrane segment spans residues 81–97; sequence TAVVIILTIAGNILVIM. At 98 to 111 the chain is on the cytoplasmic side; sequence AVSLEKKLQNATNY. The helical transmembrane segment at 112–137 threads the bilayer; it reads FLMSLAIADMLLGFLVMPVSMLTILY. The Extracellular segment spans residues 138–146; that stretch reads GYRWPLPSK. A helical transmembrane segment spans residues 147-171; the sequence is LCAVWIYLDVLFSTASIMHLCAISL. A disulfide bond links cysteine 148 and cysteine 227. Position 155 (aspartate 155) interacts with serotonin. Positions 172–174 match the DRY motif; important for ligand-induced conformation changes motif; sequence DRY. The Cytoplasmic portion of the chain corresponds to 172-191; it reads DRYVAIQNPIHHSRFNSRTK. The helical transmembrane segment at 192-215 threads the bilayer; that stretch reads AFLKIIAVWTISVGISMPIPVFGL. Residues 216-232 are Extracellular-facing; the sequence is QDDSKVFKEGSCLLADD. A helical membrane pass occupies residues 233 to 258; it reads NFVLIGSFVSFFIPLTIMVITYFLTI. Topologically, residues 259-322 are cytoplasmic; that stretch reads KSLQKEATLC…QSISNEQKAC (64 aa). At serine 280 the chain carries Phosphoserine. A helical transmembrane segment spans residues 323–348; it reads KVLGIVFFLFVVMWCPFFITNIMAVI. Residue asparagine 343 coordinates serotonin. A disulfide bridge links cysteine 349 with cysteine 353. The Extracellular segment spans residues 349–356; that stretch reads CKESCNED. Residues 357 to 382 form a helical membrane-spanning segment; the sequence is VIGALLNVFVWIGYLSSAVNPLVYTL. The NPxxY motif; important for ligand-induced conformation changes and signaling motif lies at 376–380; sequence NPLVY. At 383-471 the chain is on the cytoplasmic side; it reads FNKTYRSAFS…DGVNEKVSCV (89 aa). Positions 451–465 are enriched in basic and acidic residues; it reads QHSEEASKDNSDGVN. Residues 451–471 form a disordered region; it reads QHSEEASKDNSDGVNEKVSCV. The short motif at 469–471 is the PDZ-binding element; that stretch reads SCV.

It belongs to the G-protein coupled receptor 1 family. Interacts (via C-terminus) with MPDZ and PATJ. May interact (via C-terminus) with MPP3, PRDX6, DLG4, DLG1, CASK, APBA1 and MAGI2. Interacts with GRM2 and DRD2; this may affect signaling. In terms of tissue distribution, detected in brain cortex (at protein level). Detected in blood platelets.

It is found in the cell membrane. The protein localises to the cell projection. The protein resides in the dendrite. It localises to the axon. Its subcellular location is the cytoplasmic vesicle. It is found in the membrane. The protein localises to the caveola. The protein resides in the presynapse. Its activity is regulated as follows. G-protein coupled receptor activity is regulated by lipids: oleamide increases HTR2A-mediated activity. Inhibited by IHCH-7179 small molecule: IHCH-7179 acts both as an agonist activator for HTR1A and as an antagonist inhibitor for HTR2A. Functionally, G-protein coupled receptor for 5-hydroxytryptamine (serotonin). Also functions as a receptor for various drugs and psychoactive substances, including mescaline, psilocybin, 1-(2,5-dimethoxy-4-iodophenyl)-2-aminopropane (DOI) and lysergic acid diethylamide (LSD). Ligand binding causes a conformation change that triggers signaling via guanine nucleotide-binding proteins (G proteins) and modulates the activity of downstream effectors. HTR2A is coupled to G(q)/G(11) G alpha proteins and activates phospholipase C-beta, releasing diacylglycerol (DAG) and inositol 1,4,5-trisphosphate (IP3) second messengers that modulate the activity of phosphatidylinositol 3-kinase and promote the release of Ca(2+) ions from intracellular stores, respectively. Beta-arrestin family members inhibit signaling via G proteins and mediate activation of alternative signaling pathways. Affects neural activity, perception, cognition and mood. Plays a role in the regulation of behavior, including responses to anxiogenic situations and psychoactive substances. Plays a role in intestinal smooth muscle contraction, and may play a role in arterial vasoconstriction. In terms of biological role, (Microbial infection) Acts as a receptor for human JC polyomavirus/JCPyV. The protein is 5-hydroxytryptamine receptor 2A of Homo sapiens (Human).